Here is a 470-residue protein sequence, read N- to C-terminus: Cytochrome P450 monooxygenase FUM2 (470 aa).

Heme is bound at residue Cys-414.

Belongs to the cytochrome P450 family. The cofactor is heme.

Its pathway is mycotoxin biosynthesis. Cytochrome P450 monooxygenase; part of the gene cluster that mediates the biosynthesis of fumonisins B1 (FB1), B2 (FB2), B3 (FB3), and B4 (FB4), which are carcinogenic mycotoxins. Within the pathway, FUM2 performs the C-10 hydroxylation present in FB2 and FB4 and which occurs early in the biosynthesis. The biosynthesis starts with the FUM1-catalyzed carbon chain assembly from one molecule of acetyl-CoA, eight molecules of malonyl-CoA, and two molecules of methionine (in S-adenosyl form). The C18 polyketide chain is released from the enzyme by a nucleophilic attack of a carbanion, which is derived from R-carbon of alanine by decarboxylation, on the carbonyl carbon of polyketide acyl chain. This step is catalyzed by the pyridoxal 5'-phosphate-dependent aminoacyl transferase FUM8. The resultant 3-keto intermediate is then stereospecifically reduced to a 3-hydroxyl product by reductase FUM13. Subsequent oxidations at C-10 by the cytochrome P450 monooxygenase FUM2, C-14 and C-15 by FUM6, FUM12 or FUM15, tricarballylic esterification of the hydroxyl groups on C-14 and C-15 by acyltransferase FUM14, and C-5 hydroxylation by 2-keto-glutarate-dependent dioxygenase FUM3 furnish the biosynthesis of fumonisins. The tricarballylic moieties are most likely derived from the citric acid cycle, and their addition to the carbon backbone may involve FUM7, FUM10, FUM11 and FUM14. In Gibberella moniliformis (strain M3125 / FGSC 7600) (Maize ear and stalk rot fungus), this protein is Cytochrome P450 monooxygenase FUM2.